The chain runs to 107 residues: Prostate collagen triple helix protein (107 aa).

Residues 47-107 are disordered; that stretch reads PLIPRTPGSP…PTSPLFPFCP (61 aa). Low complexity predominate over residues 81–100; that stretch reads VGPKGPMLPLGPSGPVGPTS.

In terms of tissue distribution, expressed in prostate and testis. Weakly or not expressed in other tissues. Overexpressed in prostate cancers.

The protein resides in the cytoplasm. In terms of biological role, may be involved in growth and survival of prostate cancer cells through the TAF-Ibeta pathway. The sequence is that of Prostate collagen triple helix protein (PCOTH) from Homo sapiens (Human).